The chain runs to 309 residues: Homoserine kinase (309 aa).

91 to 101 (PIGSGLGSSAC) is an ATP binding site.

Belongs to the GHMP kinase family. Homoserine kinase subfamily.

Its subcellular location is the cytoplasm. The enzyme catalyses L-homoserine + ATP = O-phospho-L-homoserine + ADP + H(+). Its pathway is amino-acid biosynthesis; L-threonine biosynthesis; L-threonine from L-aspartate: step 4/5. Catalyzes the ATP-dependent phosphorylation of L-homoserine to L-homoserine phosphate. In Escherichia fergusonii (strain ATCC 35469 / DSM 13698 / CCUG 18766 / IAM 14443 / JCM 21226 / LMG 7866 / NBRC 102419 / NCTC 12128 / CDC 0568-73), this protein is Homoserine kinase.